The following is a 180-amino-acid chain: Crossover junction endodeoxyribonuclease RuvC (180 aa).

Catalysis depends on residues Asp-7, Glu-66, and Asp-138. Asp-7, Glu-66, and Asp-138 together coordinate Mg(2+).

This sequence belongs to the RuvC family. In terms of assembly, homodimer which binds Holliday junction (HJ) DNA. The HJ becomes 2-fold symmetrical on binding to RuvC with unstacked arms; it has a different conformation from HJ DNA in complex with RuvA. In the full resolvosome a probable DNA-RuvA(4)-RuvB(12)-RuvC(2) complex forms which resolves the HJ. The cofactor is Mg(2+).

It is found in the cytoplasm. The enzyme catalyses Endonucleolytic cleavage at a junction such as a reciprocal single-stranded crossover between two homologous DNA duplexes (Holliday junction).. Functionally, the RuvA-RuvB-RuvC complex processes Holliday junction (HJ) DNA during genetic recombination and DNA repair. Endonuclease that resolves HJ intermediates. Cleaves cruciform DNA by making single-stranded nicks across the HJ at symmetrical positions within the homologous arms, yielding a 5'-phosphate and a 3'-hydroxyl group; requires a central core of homology in the junction. The consensus cleavage sequence is 5'-(A/T)TT(C/G)-3'. Cleavage occurs on the 3'-side of the TT dinucleotide at the point of strand exchange. HJ branch migration catalyzed by RuvA-RuvB allows RuvC to scan DNA until it finds its consensus sequence, where it cleaves and resolves the cruciform DNA. This chain is Crossover junction endodeoxyribonuclease RuvC, found in Herminiimonas arsenicoxydans.